The chain runs to 278 residues: MTTRLDTRFADLKKEGRAALVTFLMCGDPDLETSLAIMKALPKAGADVIEIGMPFTDPMADGPAIQAAGLRALKAGTTLKKTLDVVRNFRKGEAATPVVLMGYYNPIFIYGVDRFLVDAKEAGVDGLIVVDLPPEEDEELCLPALKAGVNFIRLATPTTDDKRLPAVLANTSGFVYYVSITGITGAAAADDKQVGEAVARIKRHTQLPVCVGFGIRTPEAAARIARHCEGAVVGSALVDALRGTLDAEGKAGPNTVSAVTDLVAALAQGVHGVKPVSA.

Active-site proton acceptor residues include E50 and D61.

It belongs to the TrpA family. As to quaternary structure, tetramer of two alpha and two beta chains.

It catalyses the reaction (1S,2R)-1-C-(indol-3-yl)glycerol 3-phosphate + L-serine = D-glyceraldehyde 3-phosphate + L-tryptophan + H2O. It participates in amino-acid biosynthesis; L-tryptophan biosynthesis; L-tryptophan from chorismate: step 5/5. Functionally, the alpha subunit is responsible for the aldol cleavage of indoleglycerol phosphate to indole and glyceraldehyde 3-phosphate. The polypeptide is Tryptophan synthase alpha chain (Afipia carboxidovorans (strain ATCC 49405 / DSM 1227 / KCTC 32145 / OM5) (Oligotropha carboxidovorans)).